The primary structure comprises 484 residues: Perphorin-2 (484 aa).

Asn16, Asn240, Asn256, Asn265, Asn326, Asn330, Asn356, and Asn411 each carry an N-linked (GlcNAc...) asparagine glycan.

It localises to the secreted. The protein resides in the extracellular space. The protein localises to the extracellular matrix. Its function is as follows. May be involved in conversion of asexual males and females to the sexual pathway. This chain is Perphorin-2, found in Volvox carteri (Green alga).